The primary structure comprises 210 residues: Large ribosomal subunit protein uL4 (210 aa).

Positions 46 to 89 (QGTASTLTRSEVRGGGRKPYKQKGTGRARQGSIRTPLRPGGGII) are disordered. A compositionally biased stretch (basic residues) spans 60–71 (GGRKPYKQKGTG).

The protein belongs to the universal ribosomal protein uL4 family. As to quaternary structure, part of the 50S ribosomal subunit.

One of the primary rRNA binding proteins, this protein initially binds near the 5'-end of the 23S rRNA. It is important during the early stages of 50S assembly. It makes multiple contacts with different domains of the 23S rRNA in the assembled 50S subunit and ribosome. In terms of biological role, forms part of the polypeptide exit tunnel. In Prochlorococcus marinus (strain MIT 9215), this protein is Large ribosomal subunit protein uL4.